The chain runs to 561 residues: DNA ligase B (561 aa).

The active-site N6-AMP-lysine intermediate is Lys-125.

Belongs to the NAD-dependent DNA ligase family. LigB subfamily.

The enzyme catalyses NAD(+) + (deoxyribonucleotide)n-3'-hydroxyl + 5'-phospho-(deoxyribonucleotide)m = (deoxyribonucleotide)n+m + AMP + beta-nicotinamide D-nucleotide.. Its function is as follows. Catalyzes the formation of phosphodiester linkages between 5'-phosphoryl and 3'-hydroxyl groups in double-stranded DNA using NAD as a coenzyme and as the energy source for the reaction. This chain is DNA ligase B, found in Salmonella schwarzengrund (strain CVM19633).